We begin with the raw amino-acid sequence, 555 residues long: WRKY transcription factor WRKY24 (555 aa).

Disordered regions lie at residues 133-183 (TAPA…AGAN) and 197-248 (SEMA…CTFP). The span at 163–183 (QQQQQPWGYQQQPAGMDAGAN) shows a compositional bias: low complexity. Residues 214-278 (SQRRSSDDGY…YKGTHNHAKP (65 aa)) constitute a DNA-binding region (WRKY 1). The short motif at 253–259 (KKKVERS) is the Nuclear localization signal element. Residues 270 to 365 (KGTHNHAKPQ…DGEGISMAGN (96 aa)) are disordered. 2 stretches are compositionally biased toward polar residues: residues 277–294 (KPQN…QVLQ) and 310–320 (TAATPENSSAS). Residues 347 to 356 (DSKRWRKDGD) show a composition bias toward basic and acidic residues. A DNA-binding region (WRKY 2) is located at residues 379–444 (SDIDILDDGY…YEGKHNHDVP (66 aa)). The interval 466-555 (HPYLPNQPPP…DDMFFQNSLY (90 aa)) is transcription repression of gibberellic acid (GA)-induced promoters. Positions 514-555 (FDDARGSYMSQHQQQQRQNDAMHASRAKEEPGDDMFFQNSLY) are disordered.

This sequence belongs to the WRKY group II-a family. As to expression, expressed in aleurone cells. Mostly expressed in aleurone layers and leaves, and, to a lower extent, in roots, panicles and embryos.

The protein resides in the nucleus. Functionally, transcription activator. Interacts specifically with the W box (5'-(T)TGAC[CT]-3'), a frequently occurring elicitor-responsive cis-acting element. Negative regulator of both gibberellic acid (GA) and abscisic acid (ABA) signaling in aleurone cells, probably by interfering with GAM1, via the specific repression of GA- and ABA-induced promoters. The sequence is that of WRKY transcription factor WRKY24 from Oryza sativa subsp. japonica (Rice).